We begin with the raw amino-acid sequence, 132 residues long: Agouti-signaling protein (132 aa).

The first 22 residues, 1–22, serve as a signal peptide directing secretion; sequence MDVTRLLLATLLVFLCFFTANS. Asn39 carries an N-linked (GlcNAc...) asparagine glycan. The interval 62–85 is disordered; sequence IGRKAAEKKRSSKKEASMKKVVRP. The segment covering 65–79 has biased composition (basic and acidic residues); that stretch reads KAAEKKRSSKKEASM. Intrachain disulfides connect Cys93–Cys108, Cys100–Cys114, Cys107–Cys125, Cys111–Cys132, and Cys116–Cys123. Residues 93–132 form the Agouti domain; sequence CVATRNSCKPPAPACCDPCASCQCRFFRSACSCRVLSLNC.

Widely expressed at low levels. Highly expressed in the skin. Expressed in adipose tissue.

It localises to the secreted. Its function is as follows. Involved in the regulation of melanogenesis. The binding of ASP to MC1R precludes alpha-MSH initiated signaling and thus blocks production of cAMP, leading to a down-regulation of eumelanogenesis (brown/black pigment) and thus increasing synthesis of pheomelanin (yellow/red pigment). In higher primates, agouti may affect the quality of hair pigmentation rather than its pattern of deposition. Could well play a role in neuroendocrine aspects of melanocortin action. May have some functional role in regulating the lipid metabolism with adipocytes. This is Agouti-signaling protein (ASIP) from Homo sapiens (Human).